A 361-amino-acid chain; its full sequence is Phospho-N-acetylmuramoyl-pentapeptide-transferase (361 aa).

The next 10 membrane-spanning stretches (helical) occupy residues 26 to 46, 71 to 91, 97 to 117, 134 to 154, 168 to 188, 200 to 220, 236 to 256, 264 to 284, 290 to 310, and 338 to 358; these read AGGA…CIIE, TPTM…FLWA, FILW…CDDY, IFGQ…FPSN, GFFI…IVGS, GLAI…AYFA, GAGE…GFLW, IFMG…VSLF, VLVL…IQIF, and KVTV…FASL.

The protein belongs to the glycosyltransferase 4 family. MraY subfamily. The cofactor is Mg(2+).

It localises to the cell membrane. It catalyses the reaction UDP-N-acetyl-alpha-D-muramoyl-L-alanyl-gamma-D-glutamyl-meso-2,6-diaminopimeloyl-D-alanyl-D-alanine + di-trans,octa-cis-undecaprenyl phosphate = di-trans,octa-cis-undecaprenyl diphospho-N-acetyl-alpha-D-muramoyl-L-alanyl-D-glutamyl-meso-2,6-diaminopimeloyl-D-alanyl-D-alanine + UMP. It participates in cell wall biogenesis; peptidoglycan biosynthesis. Its function is as follows. Catalyzes the initial step of the lipid cycle reactions in the biosynthesis of the cell wall peptidoglycan: transfers peptidoglycan precursor phospho-MurNAc-pentapeptide from UDP-MurNAc-pentapeptide onto the lipid carrier undecaprenyl phosphate, yielding undecaprenyl-pyrophosphoryl-MurNAc-pentapeptide, known as lipid I. This is Phospho-N-acetylmuramoyl-pentapeptide-transferase from Endomicrobium trichonymphae.